A 331-amino-acid polypeptide reads, in one-letter code: Histone-lysine N-methyltransferase, H3 lysine-9 specific dim-5 (331 aa).

Residues 77–159 form the Pre-SET domain; the sequence is VGCSCASDEE…DCPNRVVERG (83 aa). Zn(2+) is bound by residues Cys79, Cys81, Cys87, Cys92, Cys94, Cys141, Cys145, Cys147, and Cys151. The SET domain maps to 162-297; the sequence is VPLQIFRTKD…KGTELTFDYV (136 aa). Residues 172–174, Asp215, Tyr217, Arg251, and 254–255 each bind S-adenosyl-L-methionine; these read RGW and NH. Zn(2+) contacts are provided by Cys257, Cys319, Cys321, and Cys326. The Post-SET domain occupies 315 to 331; the sequence is EMTKCLCGTAKCRGYLW.

Belongs to the class V-like SAM-binding methyltransferase superfamily. Histone-lysine methyltransferase family. Suvar3-9 subfamily.

It localises to the nucleus. The protein resides in the chromosome. It carries out the reaction L-lysyl(9)-[histone H3] + 3 S-adenosyl-L-methionine = N(6),N(6),N(6)-trimethyl-L-lysyl(9)-[histone H3] + 3 S-adenosyl-L-homocysteine + 3 H(+). Functionally, histone methyltransferase that specifically trimethylates histone H3 to form H3K9me3. H3K9me3 marks chromatin regions for DNA methylation. Dim-5 recognizes Arg-8 to Gly-12 of the H3 tail with Thr-11 and Gly-12 being the most important specificity determinants, the recognition of whcih is important to distinguish H3K9 from H3K27 and H4K20. This chain is Histone-lysine N-methyltransferase, H3 lysine-9 specific dim-5 (dim-5), found in Neurospora crassa (strain ATCC 24698 / 74-OR23-1A / CBS 708.71 / DSM 1257 / FGSC 987).